We begin with the raw amino-acid sequence, 191 residues long: dTTP/UTP pyrophosphatase (191 aa).

The Proton acceptor role is filled by Asp-65.

The protein belongs to the Maf family. YhdE subfamily. It depends on a divalent metal cation as a cofactor.

Its subcellular location is the cytoplasm. The catalysed reaction is dTTP + H2O = dTMP + diphosphate + H(+). It carries out the reaction UTP + H2O = UMP + diphosphate + H(+). Functionally, nucleoside triphosphate pyrophosphatase that hydrolyzes dTTP and UTP. May have a dual role in cell division arrest and in preventing the incorporation of modified nucleotides into cellular nucleic acids. The chain is dTTP/UTP pyrophosphatase from Leptospira biflexa serovar Patoc (strain Patoc 1 / Ames).